Consider the following 103-residue polypeptide: Small ribosomal subunit protein uS10 (103 aa).

This sequence belongs to the universal ribosomal protein uS10 family. Part of the 30S ribosomal subunit.

Its function is as follows. Involved in the binding of tRNA to the ribosomes. This Xanthomonas campestris pv. campestris (strain B100) protein is Small ribosomal subunit protein uS10.